We begin with the raw amino-acid sequence, 217 residues long: UPF0502 protein ESA_02280 (217 aa).

It belongs to the UPF0502 family.

The sequence is that of UPF0502 protein ESA_02280 from Cronobacter sakazakii (strain ATCC BAA-894) (Enterobacter sakazakii).